The chain runs to 148 residues: Large ribosomal subunit protein uL15 (148 aa).

Residues 1–61 are disordered; sequence MKINDLKPAP…GGQMPLQRRV (61 aa).

Belongs to the universal ribosomal protein uL15 family. Part of the 50S ribosomal subunit.

Functionally, binds to the 23S rRNA. In Thermodesulfovibrio yellowstonii (strain ATCC 51303 / DSM 11347 / YP87), this protein is Large ribosomal subunit protein uL15.